Consider the following 124-residue polypeptide: Cytochrome c oxidase subunit 4 isoform 1, mitochondrial (124 aa).

Lysine 4 is subject to N6-acetyllysine; alternate. Lysine 4 is subject to N6-succinyllysine; alternate. Phosphoserine is present on residues serine 31 and serine 33. Lysine 35 carries the N6-acetyllysine; alternate modification. Lysine 35 bears the N6-succinyllysine; alternate mark. The residue at position 42 (lysine 42) is an N6-acetyllysine.

This sequence belongs to the cytochrome c oxidase IV family. In terms of assembly, component of the cytochrome c oxidase (complex IV, CIV), a multisubunit enzyme composed of 14 subunits. The complex is composed of a catalytic core of 3 subunits MT-CO1, MT-CO2 and MT-CO3, encoded in the mitochondrial DNA, and 11 supernumerary subunits COX4I, COX5A, COX5B, COX6A, COX6B, COX6C, COX7A, COX7B, COX7C, COX8 and NDUFA4, which are encoded in the nuclear genome. The complex exists as a monomer or a dimer and forms supercomplexes (SCs) in the inner mitochondrial membrane with NADH-ubiquinone oxidoreductase (complex I, CI) and ubiquinol-cytochrome c oxidoreductase (cytochrome b-c1 complex, complex III, CIII), resulting in different assemblies (supercomplex SCI(1)III(2)IV(1) and megacomplex MCI(2)III(2)IV(2)). Interacts with PHB2; the interaction decreases in absence of SPHK2. Interacts with AFG1L. Interacts with ABCB7; this interaction allows the regulation of cellular iron homeostasis and cellular reactive oxygen species (ROS) levels in cardiomyocytes. Interacts with FLVCR2; this interaction occurs in the absence of heme and is disrupted upon heme binding. Interacts with IRGC.

Its subcellular location is the mitochondrion inner membrane. Its pathway is energy metabolism; oxidative phosphorylation. In terms of biological role, component of the cytochrome c oxidase, the last enzyme in the mitochondrial electron transport chain which drives oxidative phosphorylation. The respiratory chain contains 3 multisubunit complexes succinate dehydrogenase (complex II, CII), ubiquinol-cytochrome c oxidoreductase (cytochrome b-c1 complex, complex III, CIII) and cytochrome c oxidase (complex IV, CIV), that cooperate to transfer electrons derived from NADH and succinate to molecular oxygen, creating an electrochemical gradient over the inner membrane that drives transmembrane transport and the ATP synthase. Cytochrome c oxidase is the component of the respiratory chain that catalyzes the reduction of oxygen to water. Electrons originating from reduced cytochrome c in the intermembrane space (IMS) are transferred via the dinuclear copper A center (CU(A)) of subunit 2 and heme A of subunit 1 to the active site in subunit 1, a binuclear center (BNC) formed by heme A3 and copper B (CU(B)). The BNC reduces molecular oxygen to 2 water molecules using 4 electrons from cytochrome c in the IMS and 4 protons from the mitochondrial matrix. This is Cytochrome c oxidase subunit 4 isoform 1, mitochondrial (COX4I1) from Saimiri sciureus (Common squirrel monkey).